Reading from the N-terminus, the 193-residue chain is Protein CURVATURE THYLAKOID 1D, chloroplastic (193 aa).

Residues Met1–Arg51 constitute a chloroplast transit peptide. The Stromal portion of the chain corresponds to Cys52 to Thr117. Residues Tyr118–Val138 form a helical membrane-spanning segment. Over Ser139–Glu142 the chain is Lumenal. Residues Ala143 to Thr163 form a helical membrane-spanning segment. Topologically, residues Thr164–Glu193 are stromal.

This sequence belongs to the CURT family. In terms of assembly, homo- and heterodimers and trimers.

It localises to the plastid. The protein localises to the chloroplast thylakoid membrane. Functionally, determines thylakoid architecture by inducing membrane curvature. This Arabidopsis thaliana (Mouse-ear cress) protein is Protein CURVATURE THYLAKOID 1D, chloroplastic (CURT1D).